The sequence spans 152 residues: ALK and LTK ligand 2 (152 aa).

An N-terminal signal peptide occupies residues 1–24 (MRGPGHPLLLGLLLVLGAAGRGRG). Disulfide bonds link cysteine 111/cysteine 147 and cysteine 125/cysteine 134.

Belongs to the ALKAL family. In terms of assembly, homodimer; interchain disulfide bond is not required for homodimerization. As to expression, widely expressed with highest levels in adrenal gland and modest levels in pancreas, testis and uterus.

It is found in the secreted. The protein resides in the cell membrane. Cytokine that acts as a physiological ligand for receptor tyrosine kinases LTK and ALK, leading to their activation. Cytokine-binding is sufficient to activate LTK. In contrast, ALKAL2-driven activation of ALK is coupled with heparin-binding to ALK. Stimulation of ALK signaling is involved in neural development and regulation of energy expenditure. This chain is ALK and LTK ligand 2, found in Homo sapiens (Human).